Here is a 455-residue protein sequence, read N- to C-terminus: Acid sphingomyelinase-like phosphodiesterase 3b (455 aa).

Positions 1–18 are cleaved as a signal peptide; the sequence is MRLLAWLIFLANWGGARA. The Zn(2+) site is built by D28 and H30. An intrachain disulfide couples C45 to C64. N72 carries N-linked (GlcNAc...) asparagine glycosylation. 2 residues coordinate Zn(2+): D93 and N134. N-linked (GlcNAc...) asparagine glycosylation occurs at N164. Zn(2+) contacts are provided by H236, H277, and H279. A glycan (N-linked (GlcNAc...) asparagine) is linked at N343. 2 disulfide bridges follow: C405/C409 and C415/C428.

The protein belongs to the acid sphingomyelinase family. In terms of assembly, interacts with TLR4, TLR7, TLR8 and TLR9. It depends on Zn(2+) as a cofactor. N-glycosylated.

It is found in the secreted. Its subcellular location is the cell membrane. In terms of biological role, lipid-modulating phosphodiesterase. Active on the surface of macrophages and dendritic cells and strongly influences macrophage lipid composition and membrane fluidity. Acts as a negative regulator of Toll-like receptor signaling. Has in vitro phosphodiesterase activity, but the physiological substrate is unknown. Lacks activity with phosphocholine-containing lipids, but can cleave CDP-choline, and can release phosphate from ATP and ADP (in vitro). This Homo sapiens (Human) protein is Acid sphingomyelinase-like phosphodiesterase 3b (SMPDL3B).